The chain runs to 472 residues: Membrane-bound acylglycerophosphatidylinositol O-acyltransferase MBOAT7 (472 aa).

Residues 1 to 5 are Cytoplasmic-facing; that stretch reads MSPEE. Residues 6–22 form a helical membrane-spanning segment; that stretch reads WTYLVVLLISIPIGFLF. Topologically, residues 23–33 are lumenal; sequence KKAGPGLKRWG. Residues 34 to 57 traverse the membrane as a helical segment; the sequence is AAAVGLGLTLFTCGPHTLHSLVTI. Topologically, residues 58-73 are cytoplasmic; it reads LGTWALIQAQPCSCHA. The chain crosses the membrane as a helical span at residues 74-93; the sequence is LALAWTFSYLLFFRALSLLG. Topologically, residues 94-194 are lumenal; the sequence is LPTPTPFTNA…VPSLRPLLRR (101 aa). Residues 195 to 212 traverse the membrane as a helical segment; the sequence is AWPAPLFGLLFLLSSHLF. Over 213–231 the chain is Cytoplasmic; that stretch reads PLEAVREDAFYARPLPARL. Residues 232–261 traverse the membrane as a helical segment; the sequence is FYMIPVFFAFRMRFYVAWIAAECGCIAAGF. Over 262-426 the chain is Lumenal; the sequence is GAYPVAAKAR…LSLRDTLRYW (165 aa). N-linked (GlcNAc...) asparagine glycosylation occurs at Asn-321. The chain crosses the membrane as a helical span at residues 427–447; the sequence is ASVYFCVHVLALAALGLGLAL. Topologically, residues 448 to 472 are cytoplasmic; the sequence is GRGGPGRRKSGAPAPSPASGKLREE. The interval 450 to 472 is disordered; sequence GGPGRRKSGAPAPSPASGKLREE.

The protein belongs to the membrane-bound acyltransferase family. In terms of assembly, interacts with SPTSSA; the interaction facilitates MBOAT7 location to mitochondria-associated membranes (MAMs).

It localises to the endoplasmic reticulum membrane. It carries out the reaction a 1-acyl-sn-glycero-3-phospho-(1D-myo-inositol) + an acyl-CoA = a 1,2-diacyl-sn-glycero-3-phospho-(1D-myo-inositol) + CoA. The enzyme catalyses a 1-acyl-sn-glycero-3-phospho-(1D-myo-inositol) + (5Z,8Z,11Z,14Z)-eicosatetraenoyl-CoA = a 1-acyl-2-(5Z,8Z,11Z,14Z-eicosatetraenoyl)-sn-glycero-3-phospho-(1D-myo-inositol) + CoA. The catalysed reaction is (5Z,8Z,11Z,14Z)-eicosatetraenoyl-CoA + 1-hexadecanoyl-sn-glycero-3-phosphocholine = 1-hexadecanoyl-2-(5Z,8Z,11Z,14Z-eicosatetraenoyl)-sn-glycero-3-phosphocholine + CoA. It catalyses the reaction 1-octadecanoyl-sn-glycero-3-phospho-(1D-myo-inositol) + (5Z,8Z,11Z,14Z)-eicosatetraenoyl-CoA = 1-octadecanoyl-2-(5Z,8Z,11Z,14Z-eicosatetraenoyl)-sn-glycero-3-phospho-(1D-myo-inositol) + CoA. It participates in lipid metabolism; phospholipid metabolism. Its function is as follows. Acyltransferase which catalyzes the transfer of an acyl group from an acyl-CoA to a lysophosphatidylinositol (1-acylglycerophosphatidylinositol or LPI) leading to the production of a phosphatidylinositol (1,2-diacyl-sn-glycero-3-phosphoinositol or PI) and participates in the reacylation step of the phospholipid remodeling pathway also known as the Lands cycle. Prefers arachidonoyl-CoA as the acyl donor, thus contributing to the regulation of free levels arachidonic acid in cell. In liver, participates in the regulation of triglyceride metabolism through the phosphatidylinositol acyl-chain remodeling regulation. The protein is Membrane-bound acylglycerophosphatidylinositol O-acyltransferase MBOAT7 (MBOAT7) of Bos taurus (Bovine).